The sequence spans 465 residues: Serine/threonine-protein kinase 38 (465 aa).

At Ala-2 the chain carries N-acetylalanine. Positions 62–87 (KRLRRSAHARKETEFLRLKRTRLGLE) are interaction with S100B. Thr-74 carries the post-translational modification Phosphothreonine. The 294-residue stretch at 89 to 382 (FESLKVIGRG…VEEIKNNLFF (294 aa)) folds into the Protein kinase domain. Residues 95-103 (IGRGAFGEV) and Lys-118 contribute to the ATP site. Asp-212 serves as the catalytic Proton acceptor. Phosphoserine is present on Ser-264. At Ser-281 the chain carries Phosphoserine; by autocatalysis. The short motif at 306–311 (WSLGVI) is the UFM1-interacting motif (UFIM) element. Positions 383 to 455 (EGVDWEHIRE…KRFEGLTARG (73 aa)) constitute an AGC-kinase C-terminal domain. Residue Thr-444 is modified to Phosphothreonine; by STK24/MST3.

The protein belongs to the protein kinase superfamily. AGC Ser/Thr protein kinase family. Homodimeric S100B binds two molecules of STK38. Interacts with MOB1 and MOB2. Interacts with MAP3K1 and MAP3K2 (via the kinase catalytic domain). Forms a tripartite complex with MOBKL1B and STK3/MST2. Interacts with MICAL1; leading to inhibit the protein kinase activity by antagonizing activation by MST1/STK4. Mg(2+) serves as cofactor. In terms of processing, ISGylated. Phosphorylated by STK3/MST2 and this is enhanced by MOBKL1B. Expressed at high levels in spleen, lung, thymus, brain and fat tissue.

It localises to the nucleus. The protein resides in the cytoplasm. It is found in the chromosome. It carries out the reaction L-seryl-[protein] + ATP = O-phospho-L-seryl-[protein] + ADP + H(+). It catalyses the reaction L-threonyl-[protein] + ATP = O-phospho-L-threonyl-[protein] + ADP + H(+). Its activity is regulated as follows. Activated by binding of S100B which releases autoinhibitory N-lobe interactions, enabling ATP to bind and the autophosphorylation of Ser-281. Thr-444 then undergoes calcium-dependent phosphorylation by STK24/MST3. Interactions between phosphorylated Thr-444 and the N-lobe promote additional structural changes that complete the activation of the kinase. Autoinhibition is also released by the binding of MOB1/MOBKL1A and MOB2/HCCA2 to the N-terminal of STK38. Functionally, serine/threonine-protein kinase that acts as a negative regulator of MAP3K1/2 signaling. Converts MAP3K2 from its phosphorylated form to its non-phosphorylated form and inhibits autophosphorylation of MAP3K2. Acts as an ufmylation 'reader' in a kinase-independent manner: specifically recognizes and binds mono-ufmylated histone H4 in response to DNA damage, promoting the recruitment of SUV39H1 to the double-strand breaks, resulting in ATM activation. The sequence is that of Serine/threonine-protein kinase 38 from Mus musculus (Mouse).